The primary structure comprises 137 residues: Small heat shock protein IbpA (137 aa).

The 110-residue stretch at Asn28–Lys137 folds into the sHSP domain.

Belongs to the small heat shock protein (HSP20) family. As to quaternary structure, monomer. Forms homomultimers of about 100-150 subunits at optimal growth temperatures. Conformation changes to monomers at high temperatures or high ionic concentrations.

The protein localises to the cytoplasm. Its function is as follows. Associates with aggregated proteins, together with IbpB, to stabilize and protect them from irreversible denaturation and extensive proteolysis during heat shock and oxidative stress. Aggregated proteins bound to the IbpAB complex are more efficiently refolded and reactivated by the ATP-dependent chaperone systems ClpB and DnaK/DnaJ/GrpE. Its activity is ATP-independent. The protein is Small heat shock protein IbpA of Yersinia pseudotuberculosis serotype O:1b (strain IP 31758).